Consider the following 445-residue polypeptide: Tubulin beta chain (445 aa).

Residues Q11, E69, S138, G142, T143, G144, N204, and N226 each coordinate GTP. E69 lines the Mg(2+) pocket.

Belongs to the tubulin family. In terms of assembly, dimer of alpha and beta chains. A typical microtubule is a hollow water-filled tube with an outer diameter of 25 nm and an inner diameter of 15 nM. Alpha-beta heterodimers associate head-to-tail to form protofilaments running lengthwise along the microtubule wall with the beta-tubulin subunit facing the microtubule plus end conferring a structural polarity. Microtubules usually have 13 protofilaments but different protofilament numbers can be found in some organisms and specialized cells. Requires Mg(2+) as cofactor.

Its subcellular location is the cytoplasm. The protein localises to the cytoskeleton. Its function is as follows. Tubulin is the major constituent of microtubules, a cylinder consisting of laterally associated linear protofilaments composed of alpha- and beta-tubulin heterodimers. Microtubules grow by the addition of GTP-tubulin dimers to the microtubule end, where a stabilizing cap forms. Below the cap, tubulin dimers are in GDP-bound state, owing to GTPase activity of alpha-tubulin. This chain is Tubulin beta chain (TUB-2), found in Schizophyllum commune (Split gill fungus).